We begin with the raw amino-acid sequence, 476 residues long: Aspartyl/glutamyl-tRNA(Asn/Gln) amidotransferase subunit B (476 aa).

This sequence belongs to the GatB/GatE family. GatB subfamily. Heterotrimer of A, B and C subunits.

The enzyme catalyses L-glutamyl-tRNA(Gln) + L-glutamine + ATP + H2O = L-glutaminyl-tRNA(Gln) + L-glutamate + ADP + phosphate + H(+). It carries out the reaction L-aspartyl-tRNA(Asn) + L-glutamine + ATP + H2O = L-asparaginyl-tRNA(Asn) + L-glutamate + ADP + phosphate + 2 H(+). Functionally, allows the formation of correctly charged Asn-tRNA(Asn) or Gln-tRNA(Gln) through the transamidation of misacylated Asp-tRNA(Asn) or Glu-tRNA(Gln) in organisms which lack either or both of asparaginyl-tRNA or glutaminyl-tRNA synthetases. The reaction takes place in the presence of glutamine and ATP through an activated phospho-Asp-tRNA(Asn) or phospho-Glu-tRNA(Gln). This chain is Aspartyl/glutamyl-tRNA(Asn/Gln) amidotransferase subunit B, found in Lactobacillus johnsonii (strain CNCM I-12250 / La1 / NCC 533).